A 603-amino-acid polypeptide reads, in one-letter code: Conglutin beta 2 (603 aa).

The signal sequence occupies residues 1–30 (MANMRVKFPTLVLLLGIVFLMAVSIGIAYG). The span at 36–105 (KNHERPQERE…REPSRGREQE (70 aa)) shows a compositional bias: basic and acidic residues. Disordered stretches follow at residues 36-177 (KNHE…RNPY), 343-363 (DGQEDEEQSRGQEQSHQDQGV), and 375-399 (LRKHAQSSSGKGKPSESGPFNLRSD). Residues 137-147 (QGSSSSSGRQS) are compositionally biased toward low complexity. Positions 148–172 (GYERREQREEREQQQEQDSRSESRR) are enriched in basic and acidic residues. A Cupin type-1 1 domain is found at 177-335 (YYFSYERFQT…TFNTRYEEIQ (159 aa)). Low complexity predominate over residues 381–393 (SSSGKGKPSESGP). In terms of domain architecture, Cupin type-1 2 spans 394 to 554 (FNLRSDEPIY…TFPGSVEDVE (161 aa)). Residue asparagine 504 is glycosylated (N-linked (GlcNAc...) asparagine). Low complexity predominate over residues 564–574 (YFANAQPQQQQ). A disordered region spans residues 564 to 583 (YFANAQPQQQQQREKEGRRG).

Belongs to the 7S seed storage protein family. In terms of assembly, component of globulins complexes which accumulate in seeds.

In terms of biological role, seed storage protein. Accumulates during seed development and is hydrolyzed after germination to provide a carbon and nitrogen source for the developing seedling. The sequence is that of Conglutin beta 2 from Lupinus angustifolius (Narrow-leaved blue lupine).